Here is a 721-residue protein sequence, read N- to C-terminus: uncharacterized protein (721 aa).

Residues 6-26 (QLIFVNFYVILIIWWFVMGIL) form a helical membrane-spanning segment. Residue 308–315 (GGTGSGKT) coordinates ATP.

It belongs to the GSP E family. This protein undergoes a protein self splicing that involves a post-translational excision of the intervening region (intein) followed by peptide ligation.

It is found in the membrane. This is an uncharacterized protein from Methanocaldococcus jannaschii (strain ATCC 43067 / DSM 2661 / JAL-1 / JCM 10045 / NBRC 100440) (Methanococcus jannaschii).